The sequence spans 203 residues: Small ribosomal subunit protein uS4 (203 aa).

In terms of domain architecture, S4 RNA-binding spans arginine 93–valine 156.

This sequence belongs to the universal ribosomal protein uS4 family. In terms of assembly, part of the 30S ribosomal subunit. Contacts protein S5. The interaction surface between S4 and S5 is involved in control of translational fidelity.

In terms of biological role, one of the primary rRNA binding proteins, it binds directly to 16S rRNA where it nucleates assembly of the body of the 30S subunit. Its function is as follows. With S5 and S12 plays an important role in translational accuracy. In Streptococcus agalactiae serotype Ia (strain ATCC 27591 / A909 / CDC SS700), this protein is Small ribosomal subunit protein uS4.